Consider the following 379-residue polypeptide: Alcohol dehydrogenase 2 (379 aa).

Residue cysteine 48 participates in Zn(2+) binding. 49–53 (HTDML) is a binding site for NAD(+). Zn(2+) contacts are provided by histidine 69, cysteine 100, cysteine 103, cysteine 106, cysteine 114, and cysteine 178. NAD(+) contacts are provided by residues 203–208 (GLGAVG), aspartate 227, lysine 232, 275–277 (TGI), 298–300 (IGA), and 321–323 (TTF).

It belongs to the zinc-containing alcohol dehydrogenase family. Class-IV subfamily. As to quaternary structure, homodimer. The cofactor is Zn(2+). Expressed in flowers and disk florets.

It carries out the reaction (R,R)-chrysanthemol + NAD(+) = (1R,3R)-chrysanthemal + NADH + H(+). It catalyses the reaction nerol + NAD(+) = neral + NADH + H(+). The enzyme catalyses (S)-(-)-citronellol + NAD(+) = (S)-(-)-citronellal + NADH + H(+). The catalysed reaction is perillyl alcohol + NAD(+) = perillyl aldehyde + NADH + H(+). It carries out the reaction (6E)-8-hydroxygeraniol + NAD(+) = (6E)-8-hydroxygeranial + NADH + H(+). It catalyses the reaction (2E)-geraniol + NAD(+) = (2E)-geranial + NADH + H(+). The protein operates within isoprenoid biosynthesis. In terms of biological role, component of the monoterpenoid pyrethrins biosynthesis; pyrethrins are widely used plant-derived pesticide. Mediates the conversion of trans-chrysanthemol into trans-chrysanthemal. The polypeptide is Alcohol dehydrogenase 2 (Tanacetum cinerariifolium (Dalmatian daisy)).